The sequence spans 301 residues: Transcription elongation factor A protein 1 (301 aa).

An N-acetylmethionine modification is found at Met-1. A TFIIS N-terminal domain is found at 3–80 (DEVIRIAKKM…KSWKKLLDGP (78 aa)). Lys-55 participates in a covalent cross-link: Glycyl lysine isopeptide (Lys-Gly) (interchain with G-Cter in ubiquitin). A phosphoserine mark is found at Ser-57, Ser-81, Ser-97, and Ser-100. The segment covering 76–93 (LLDGPSTDKDSEEKKKDT) has biased composition (basic and acidic residues). The tract at residues 76-139 (LLDGPSTDKD…FPRAPSTSDS (64 aa)) is disordered. A TFIIS central domain is found at 140–256 (VRLKCREMLA…EHQMAKTGGT (117 aa)). The TFIIS-type zinc-finger motif lies at 259–299 (DLFTCGKCKKKNCTYTQVQTRSADEPMTTFVVCNECGNRWK). Residues Cys-263, Cys-266, Cys-291, and Cys-294 each coordinate Zn(2+).

It belongs to the TFS-II family. As to quaternary structure, interacts with EAF2. Associates with UBR5 and forms a transcription regulatory complex made of CDK9, Pol II, UBR5 and TCEA1/TFIIS. Part of TBP-based Pol II pre-initiation complex (PIC), in which Pol II core assembles with general transcription factors and other specific initiation factors including GTF2E1, GTF2E2, GTF2F1, GTF2F2, TCEA1, ERCC2, ERCC3, GTF2H2, GTF2H3, GTF2H4, GTF2H5, GTF2A1, GTF2A2, GTF2B and TBP; this large multi-subunit PIC complex mediates DNA unwinding and targets Pol II core to the transcription start site where the first phosphodiester bond forms.

It localises to the nucleus. Necessary for efficient RNA polymerase II transcription elongation past template-encoded arresting sites. The arresting sites in DNA have the property of trapping a certain fraction of elongating RNA polymerases that pass through, resulting in locked ternary complexes. Cleavage of the nascent transcript by S-II allows the resumption of elongation from the new 3'-terminus. The chain is Transcription elongation factor A protein 1 (TCEA1) from Bos taurus (Bovine).